The chain runs to 903 residues: FIGNL1-interacting regulator of recombination and mitosis (903 aa).

2 positions are modified to phosphoserine: Ser101 and Ser795. Position 843 is an N6-acetyllysine (Lys843).

In terms of assembly, interacts (via its N-terminal region) with PLK1; controls PLK1 kinase activity. Interacts (via the KVVXF motif) with PPP1CC; controls PLK1 kinase activity. Interacts with FIGNL1; may regulate homologous recombination. Phosphorylation at Ser-101 by PLK1 strengthens FIRRM-PLK1 interaction. Phosphorylation at Ser-795 by PLK1 negatively regulates its interaction with PPP1CC.

It localises to the chromosome. The protein localises to the centromere. The protein resides in the kinetochore. Its subcellular location is the nucleus. It is found in the midbody. It localises to the cytoplasm. The protein localises to the cytoskeleton. The protein resides in the spindle. Regulates PLK1 kinase activity at kinetochores and promotes faithful chromosome segregation in prometaphase by bridging kinase and phosphatase activities. Phosphorylation of FIRRM by PLK1 negatively regulates its interaction with the phosphatase, PPP1CC, thus creating a negative feedback loop for maintaining proper PLK1 kinase activity during mitosis. In complex with FIGL1 may regulate homologous recombination. In Mus musculus (Mouse), this protein is FIGNL1-interacting regulator of recombination and mitosis.